The chain runs to 797 residues: Protein tamozhennic (797 aa).

Residues 79-146 form the PUB domain; that stretch reads QNAIVAFETI…AAEDTFVLEG (68 aa). Disordered regions lie at residues 515–570 and 638–697; these read AGGI…ISDL and LSIT…SAGV. Residues 662 to 679 show a composition bias toward basic and acidic residues; sequence EKARTLDKKSGTGRREAK. The RanBP2-type zinc-finger motif lies at 735–766; the sequence is IVTSPNEWSCSFCTFLNPDTKRICEMCCRSKD.

As to quaternary structure, homomultimer. Binds to dl and msl-1 via their nuclear localization signal (NLS). Also binds to Ran, Ran-like and mbo.

The protein resides in the cytoplasm. Its function is as follows. Has an essential role during oogenesis and embryogenesis, perhaps in modulating the levels of nuclear import of additional proteins. Modulates the nuclear import of dorsal (dl), Dif and male specific lethal 1 (msl-1). Negatively regulates nuclear import of dl and controls the accumulation of dl in the nucleus after immune challenge. In Drosophila melanogaster (Fruit fly), this protein is Protein tamozhennic (tamo).